Reading from the N-terminus, the 173-residue chain is Endosomal/vacuolar adapter protein YPT35 (173 aa).

The PX domain occupies 40–173 (ERAFVTNCTI…LVIQFLRPRK (134 aa)).

The protein belongs to the YPT35 family.

It localises to the endosome membrane. The protein localises to the vacuole membrane. Recruits the lipid transfer protein VPS13 to endosomal and vacuolar membranes. The chain is Endosomal/vacuolar adapter protein YPT35 (YPT35) from Candida glabrata (strain ATCC 2001 / BCRC 20586 / JCM 3761 / NBRC 0622 / NRRL Y-65 / CBS 138) (Yeast).